The sequence spans 451 residues: Protein NINJA homolog 1 (451 aa).

3 disordered regions span residues Met1–Pro223, Ile321–Lys346, and Asp427–Asn451. The segment covering Lys23–Pro35 has biased composition (basic and acidic residues). Polar residues-rich tracts occupy residues Glu38–Pro49, Pro86–Val103, and Ile143–Gly153. Acidic residues predominate over residues Glu154 to Ala163. The span at Ser207–Gly216 shows a compositional bias: low complexity.

The protein belongs to the Ninja family. In terms of assembly, interacts with TIFY10C/JAZ8. Interacts with TIFY11A/JAZ9.

The protein localises to the nucleus. This chain is Protein NINJA homolog 1, found in Oryza sativa subsp. japonica (Rice).